The primary structure comprises 275 residues: Intercellular adhesion molecule 2 (275 aa).

Residues 1–24 form the signal peptide; that stretch reads MSSFGYRTLTVALFALICCPGSDE. Residues 25 to 223 lie on the Extracellular side of the membrane; that stretch reads KVFEVHVRPK…EIYEPVSDSQ (199 aa). The Ig-like C2-type 1 domain occupies 41–98; the sequence is KASLEVNCSTTCNQPEVGGLETSLDKILLDEQAQWKHYLVSNISHDTVLQCHFTCSGK. Asparagine 47, asparagine 82, asparagine 105, asparagine 153, asparagine 158, asparagine 176, and asparagine 187 each carry an N-linked (GlcNAc...) asparagine glycan. Intrachain disulfides connect cysteine 48–cysteine 91 and cysteine 52–cysteine 95. Positions 127–197 constitute an Ig-like C2-type 2 domain; that stretch reads GKSFTIECRV…FSCLAVLDLI (71 aa). Cysteine 134 and cysteine 190 are joined by a disulfide. Residues 224 to 248 traverse the membrane as a helical segment; it reads MVIIVTVVSVLLSLFVTSVLLCFIF. The Cytoplasmic segment spans residues 249-275; that stretch reads GQHLRQQRMGTYGVRAAWRRLPQAFRP. The interval 251 to 275 is required for interaction with EZR, MSN and RDX and co-localization to microvilli; it reads HLRQQRMGTYGVRAAWRRLPQAFRP.

This sequence belongs to the immunoglobulin superfamily. ICAM family. In terms of assembly, interacts with RDX, EZR and MSN.

It is found in the membrane. It localises to the cell projection. The protein localises to the microvillus. Its function is as follows. ICAM proteins are ligands for the leukocyte adhesion protein LFA-1 (integrin alpha-L/beta-2). ICAM2 may play a role in lymphocyte recirculation by blocking LFA-1-dependent cell adhesion. It mediates adhesive interactions important for antigen-specific immune response, NK-cell mediated clearance, lymphocyte recirculation, and other cellular interactions important for immune response and surveillance. This Gorilla gorilla gorilla (Western lowland gorilla) protein is Intercellular adhesion molecule 2 (ICAM2).